The following is a 265-amino-acid chain: MIESQRHSYHLVDPSPWPISGSLGALATTVGGVMYMHSFQGGATLLSLGLIFILYTMFVWWRDVLRESTLEGHHTKVVQLGPRYGSISFIVSEVMFLFAFFRASSHSSLAPTVEIGGIWPPKGIGVLDPREIPFLNTPILLSSGAAVTWAHHAILAGKEKRAVYALVATVSLALVFTGFQGMEYYQAPFTISDSIYGSTFFLATGFHGFHVIIGTLFLIICGIRQYLGQMTKEHHVGFEAAAWYWHFVDVVRLFPFVSIYWWGGI.

Helical transmembrane passes span 16 to 36, 41 to 61, 81 to 101, 137 to 157, 162 to 182, 200 to 220, and 245 to 265; these read PWPI…VMYM, GGAT…FVWW, GPRY…FAFF, TPIL…ILAG, AVYA…FQGM, FFLA…FLII, and WHFV…WGGI.

The protein belongs to the cytochrome c oxidase subunit 3 family. In terms of assembly, component of the cytochrome c oxidase (complex IV, CIV), a multisubunit enzyme composed of a catalytic core of 3 subunits and several supernumerary subunits. The complex exists as a monomer or a dimer and forms supercomplexes (SCs) in the inner mitochondrial membrane with ubiquinol-cytochrome c oxidoreductase (cytochrome b-c1 complex, complex III, CIII).

Its subcellular location is the mitochondrion inner membrane. The catalysed reaction is 4 Fe(II)-[cytochrome c] + O2 + 8 H(+)(in) = 4 Fe(III)-[cytochrome c] + 2 H2O + 4 H(+)(out). In terms of biological role, component of the cytochrome c oxidase, the last enzyme in the mitochondrial electron transport chain which drives oxidative phosphorylation. The respiratory chain contains 3 multisubunit complexes succinate dehydrogenase (complex II, CII), ubiquinol-cytochrome c oxidoreductase (cytochrome b-c1 complex, complex III, CIII) and cytochrome c oxidase (complex IV, CIV), that cooperate to transfer electrons derived from NADH and succinate to molecular oxygen, creating an electrochemical gradient over the inner membrane that drives transmembrane transport and the ATP synthase. Cytochrome c oxidase is the component of the respiratory chain that catalyzes the reduction of oxygen to water. Electrons originating from reduced cytochrome c in the intermembrane space (IMS) are transferred via the dinuclear copper A center (CU(A)) of subunit 2 and heme A of subunit 1 to the active site in subunit 1, a binuclear center (BNC) formed by heme A3 and copper B (CU(B)). The BNC reduces molecular oxygen to 2 water molecules using 4 electrons from cytochrome c in the IMS and 4 protons from the mitochondrial matrix. The protein is Cytochrome c oxidase subunit 3 (COX3) of Vicia faba (Broad bean).